Here is a 797-residue protein sequence, read N- to C-terminus: Xaa-Pro dipeptidyl-peptidase (797 aa).

Active-site charge relay system residues include serine 370, aspartate 490, and histidine 521.

Belongs to the peptidase S15 family. Homodimer.

It localises to the cytoplasm. It carries out the reaction Hydrolyzes Xaa-Pro-|- bonds to release unblocked, N-terminal dipeptides from substrates including Ala-Pro-|-p-nitroanilide and (sequentially) Tyr-Pro-|-Phe-Pro-|-Gly-Pro-|-Ile.. Functionally, removes N-terminal dipeptides sequentially from polypeptides having unsubstituted N-termini provided that the penultimate residue is proline. This is Xaa-Pro dipeptidyl-peptidase from Lacticaseibacillus rhamnosus (Lactobacillus rhamnosus).